A 226-amino-acid chain; its full sequence is Deoxyribose-phosphate aldolase (226 aa).

The active-site Proton donor/acceptor is aspartate 94. Residue lysine 156 is the Schiff-base intermediate with acetaldehyde of the active site. Lysine 185 serves as the catalytic Proton donor/acceptor.

The protein belongs to the DeoC/FbaB aldolase family. DeoC type 1 subfamily.

The protein localises to the cytoplasm. It carries out the reaction 2-deoxy-D-ribose 5-phosphate = D-glyceraldehyde 3-phosphate + acetaldehyde. The protein operates within carbohydrate degradation; 2-deoxy-D-ribose 1-phosphate degradation; D-glyceraldehyde 3-phosphate and acetaldehyde from 2-deoxy-alpha-D-ribose 1-phosphate: step 2/2. Functionally, catalyzes a reversible aldol reaction between acetaldehyde and D-glyceraldehyde 3-phosphate to generate 2-deoxy-D-ribose 5-phosphate. The protein is Deoxyribose-phosphate aldolase of Burkholderia orbicola (strain MC0-3).